The chain runs to 179 residues: uncharacterized protein (179 aa).

Transmembrane regions (helical) follow at residues 33-53, 63-83, 89-109, and 115-135; these read HIIALASKIAFTLALLYVILD, VMFIALFLGFVSYLSGDMLVL, ITASLADFGLSFVILWVFVLT, and FSPFGAALLSAACLTVFEYFF.

It localises to the cell membrane. This is an uncharacterized protein from Bacillus subtilis (strain 168).